The sequence spans 720 residues: Translation initiation factor IF-2 (720 aa).

The interval 48–138 is disordered; it reads KKFKASQAKD…NEVEETKEMP (91 aa). Composition is skewed to low complexity over residues 60 to 75 and 99 to 113; these read KQNT…NKQN and KGKQ…NKNQ. The span at 114–123 shows a compositional bias: basic residues; the sequence is KNNKNKKNNK. Residues 222-391 form the tr-type G domain; that stretch reads ERPAVVTIMG…GLVAEVQELK (170 aa). The G1 stretch occupies residues 231-238; sequence GHVDHGKT. 231-238 lines the GTP pocket; the sequence is GHVDHGKT. The interval 256 to 260 is G2; that stretch reads GITQH. The segment at 277-280 is G3; sequence DTPG. GTP contacts are provided by residues 277-281 and 331-334; these read DTPGH and NKID. Residues 331 to 334 form a G4 region; it reads NKID. Residues 367 to 369 form a G5 region; sequence SAL.

The protein belongs to the TRAFAC class translation factor GTPase superfamily. Classic translation factor GTPase family. IF-2 subfamily.

It is found in the cytoplasm. Functionally, one of the essential components for the initiation of protein synthesis. Protects formylmethionyl-tRNA from spontaneous hydrolysis and promotes its binding to the 30S ribosomal subunits. Also involved in the hydrolysis of GTP during the formation of the 70S ribosomal complex. This Staphylococcus epidermidis (strain ATCC 35984 / DSM 28319 / BCRC 17069 / CCUG 31568 / BM 3577 / RP62A) protein is Translation initiation factor IF-2.